Here is a 605-residue protein sequence, read N- to C-terminus: Ankyrin repeat domain-containing protein 13D (605 aa).

2 consecutive UIM domains span residues 482 to 501 (EDDD…AGTE) and 528 to 547 (EEQL…STES). Residues 538 to 554 (QESLQLSTESRGPESPQ) are compositionally biased toward low complexity. The interval 538 to 605 (QESLQLSTES…RILQLSLTEH (68 aa)) is disordered. A Phosphoserine modification is found at Ser-552. A Phosphothreonine modification is found at Thr-556. The segment covering 564–575 (SFEEQLRLALEL) has biased composition (low complexity). 2 consecutive UIM domains span residues 564–583 (SFEE…QEEL) and 589–605 (QEED…LTEH). A compositionally biased stretch (basic and acidic residues) spans 576–589 (SSREQEELERRGQQ).

In terms of assembly, interacts with EGFR (ubiquitinated); the interaction is direct and may regulate EGFR internalization.

It localises to the cell membrane. It is found in the late endosome. In terms of biological role, ubiquitin-binding protein that specifically recognizes and binds 'Lys-63'-linked ubiquitin. Does not bind 'Lys-48'-linked ubiquitin. Positively regulates the internalization of ligand-activated EGFR by binding to the Ub moiety of ubiquitinated EGFR at the cell membrane. This is Ankyrin repeat domain-containing protein 13D (Ankrd13d) from Mus musculus (Mouse).